A 454-amino-acid polypeptide reads, in one-letter code: Bifunctional protein GlmU (454 aa).

A pyrophosphorylase region spans residues 1–226 (MALNVVILAA…AIEVEGANNR (226 aa)). UDP-N-acetyl-alpha-D-glucosamine-binding positions include 8–11 (LAAG), Lys22, Gln73, 78–79 (GT), 100–102 (YGD), Gly137, Glu151, Asn166, and Asn224. Residue Asp102 coordinates Mg(2+). Asn224 contacts Mg(2+). A linker region spans residues 227 to 247 (VQLAQLERAYQAREAEKLMIA). Positions 248-454 (GANLRDPSRI…GWQRPVKIKK (207 aa)) are N-acetyltransferase. Positions 330 and 348 each coordinate UDP-N-acetyl-alpha-D-glucosamine. The active-site Proton acceptor is His360. UDP-N-acetyl-alpha-D-glucosamine-binding residues include Tyr363 and Asn374. Acetyl-CoA contacts are provided by residues Ala377, 383–384 (NY), Ser402, Ala420, and Arg437.

The protein in the N-terminal section; belongs to the N-acetylglucosamine-1-phosphate uridyltransferase family. It in the C-terminal section; belongs to the transferase hexapeptide repeat family. As to quaternary structure, homotrimer. Mg(2+) is required as a cofactor.

Its subcellular location is the cytoplasm. It carries out the reaction alpha-D-glucosamine 1-phosphate + acetyl-CoA = N-acetyl-alpha-D-glucosamine 1-phosphate + CoA + H(+). The enzyme catalyses N-acetyl-alpha-D-glucosamine 1-phosphate + UTP + H(+) = UDP-N-acetyl-alpha-D-glucosamine + diphosphate. The protein operates within nucleotide-sugar biosynthesis; UDP-N-acetyl-alpha-D-glucosamine biosynthesis; N-acetyl-alpha-D-glucosamine 1-phosphate from alpha-D-glucosamine 6-phosphate (route II): step 2/2. It functions in the pathway nucleotide-sugar biosynthesis; UDP-N-acetyl-alpha-D-glucosamine biosynthesis; UDP-N-acetyl-alpha-D-glucosamine from N-acetyl-alpha-D-glucosamine 1-phosphate: step 1/1. Its pathway is bacterial outer membrane biogenesis; LPS lipid A biosynthesis. In terms of biological role, catalyzes the last two sequential reactions in the de novo biosynthetic pathway for UDP-N-acetylglucosamine (UDP-GlcNAc). The C-terminal domain catalyzes the transfer of acetyl group from acetyl coenzyme A to glucosamine-1-phosphate (GlcN-1-P) to produce N-acetylglucosamine-1-phosphate (GlcNAc-1-P), which is converted into UDP-GlcNAc by the transfer of uridine 5-monophosphate (from uridine 5-triphosphate), a reaction catalyzed by the N-terminal domain. The polypeptide is Bifunctional protein GlmU (Shewanella oneidensis (strain ATCC 700550 / JCM 31522 / CIP 106686 / LMG 19005 / NCIMB 14063 / MR-1)).